The following is a 209-amino-acid chain: Small ribosomal subunit protein uS3 (209 aa).

One can recognise a KH type-2 domain in the interval 38–107; it reads IRKFIKNKYY…RVVINIEEIK (70 aa).

It belongs to the universal ribosomal protein uS3 family. In terms of assembly, part of the 30S ribosomal subunit. Forms a tight complex with proteins S10 and S14.

Binds the lower part of the 30S subunit head. Binds mRNA in the 70S ribosome, positioning it for translation. The sequence is that of Small ribosomal subunit protein uS3 from Thermotoga sp. (strain RQ2).